Here is a 101-residue protein sequence, read N- to C-terminus: Small ribosomal subunit protein uS14 (101 aa).

Residues 36–61 (ASAEDRRAARQKLQSLPRNSSPVRQR) are disordered. Polar residues predominate over residues 47–59 (KLQSLPRNSSPVR).

The protein belongs to the universal ribosomal protein uS14 family. Part of the 30S ribosomal subunit. Contacts proteins S3 and S10.

In terms of biological role, binds 16S rRNA, required for the assembly of 30S particles and may also be responsible for determining the conformation of the 16S rRNA at the A site. This Methylobacillus flagellatus (strain ATCC 51484 / DSM 6875 / VKM B-1610 / KT) protein is Small ribosomal subunit protein uS14.